Reading from the N-terminus, the 179-residue chain is Nucleoside-triphosphatase THEP1 (179 aa).

Residues glycine 7–threonine 14 and isoleucine 98–glycine 105 each bind ATP.

The protein belongs to the THEP1 NTPase family.

The enzyme catalyses a ribonucleoside 5'-triphosphate + H2O = a ribonucleoside 5'-diphosphate + phosphate + H(+). Has nucleotide phosphatase activity towards ATP, GTP, CTP, TTP and UTP. May hydrolyze nucleoside diphosphates with lower efficiency. In Pyrococcus abyssi (strain GE5 / Orsay), this protein is Nucleoside-triphosphatase THEP1.